We begin with the raw amino-acid sequence, 203 residues long: MASNTLIESTSLRRSPAEHLAEAMAQGSTAGAVVLREIAFATQVGVRAVPGSAGHAALAAALGTGLPQQVGEVAGAAEGTAVLWLGPDEFLAIAPEGSGLAGELVAALGGEPGQVIDLSANRSVLELSGPAAPLVLRKSCPADLHPRAFGVNRAIATTLANIPVLLWRTGEQSWYVLPRVFFTEHTVHWLIDAMTEFASPTVA.

This sequence belongs to the SoxG family. In terms of assembly, heterotetramer composed of subunits alpha (SoxA), beta (SoxB), gamma (SoxG) and delta (SoxD).

The protein localises to the cytoplasm. It carries out the reaction sarcosine + (6S)-5,6,7,8-tetrahydrofolate + O2 = (6R)-5,10-methylene-5,6,7,8-tetrahydrofolate + glycine + H2O2. The catalysed reaction is sarcosine + O2 + H2O = formaldehyde + glycine + H2O2. Functionally, in the presence of tetrahydrofolate, catalyzes the oxidative demethylation of sarcosine to yield glycine, 5,10-methylenetetrahydrofolate and hydrogen peroxide. In the absence of tetrahydrofolate, catalyzes the oxidative demethylation of sarcosine to yield glycine, formaldehyde and hydrogen peroxide. This Arthrobacter sp protein is Sarcosine oxidase subunit gamma (soxG).